The chain runs to 963 residues: Bifunctional glutamine synthetase adenylyltransferase/adenylyl-removing enzyme (963 aa).

The segment at 1–451 is adenylyl removase; the sequence is MAAPSELQLY…EHFADIIAER (451 aa). The interval 461 to 963 is adenylyl transferase; the sequence is TIEWKALWAG…VAFWEKVFAE (503 aa).

This sequence belongs to the GlnE family. It depends on Mg(2+) as a cofactor.

The catalysed reaction is [glutamine synthetase]-O(4)-(5'-adenylyl)-L-tyrosine + phosphate = [glutamine synthetase]-L-tyrosine + ADP. It carries out the reaction [glutamine synthetase]-L-tyrosine + ATP = [glutamine synthetase]-O(4)-(5'-adenylyl)-L-tyrosine + diphosphate. Functionally, involved in the regulation of glutamine synthetase GlnA, a key enzyme in the process to assimilate ammonia. When cellular nitrogen levels are high, the C-terminal adenylyl transferase (AT) inactivates GlnA by covalent transfer of an adenylyl group from ATP to specific tyrosine residue of GlnA, thus reducing its activity. Conversely, when nitrogen levels are low, the N-terminal adenylyl removase (AR) activates GlnA by removing the adenylyl group by phosphorolysis, increasing its activity. The regulatory region of GlnE binds the signal transduction protein PII (GlnB) which indicates the nitrogen status of the cell. The chain is Bifunctional glutamine synthetase adenylyltransferase/adenylyl-removing enzyme from Hahella chejuensis (strain KCTC 2396).